A 191-amino-acid polypeptide reads, in one-letter code: Succinoglycan biosynthesis protein ExoI (191 aa).

The interval 1–21 (MTRIKSAVAAGGRRAPHSARL) is disordered.

Its pathway is glycan metabolism; exopolysaccharide biosynthesis. This chain is Succinoglycan biosynthesis protein ExoI (exoI), found in Rhizobium meliloti (strain 1021) (Ensifer meliloti).